The sequence spans 103 residues: NADH-quinone oxidoreductase subunit K 2 (103 aa).

3 helical membrane-spanning segments follow: residues 7–27 (LAWY…GFMI), 31–51 (IITI…TFVA), and 63–83 (IFVF…LGII).

Belongs to the complex I subunit 4L family. NDH-1 is composed of 14 different subunits. Subunits NuoA, H, J, K, L, M, N constitute the membrane sector of the complex.

The protein resides in the cell inner membrane. The enzyme catalyses a quinone + NADH + 5 H(+)(in) = a quinol + NAD(+) + 4 H(+)(out). In terms of biological role, NDH-1 shuttles electrons from NADH, via FMN and iron-sulfur (Fe-S) centers, to quinones in the respiratory chain. The immediate electron acceptor for the enzyme in this species is believed to be ubiquinone. Couples the redox reaction to proton translocation (for every two electrons transferred, four hydrogen ions are translocated across the cytoplasmic membrane), and thus conserves the redox energy in a proton gradient. In Koribacter versatilis (strain Ellin345), this protein is NADH-quinone oxidoreductase subunit K 2.